The sequence spans 593 residues: Tyrosine-protein phosphatase non-receptor type 11 (593 aa).

Position 2 is an N-acetylthreonine (T2). SH2 domains are found at residues 6-102 (WFHP…KYPL) and 112-216 (WFHG…KQPL). Phosphotyrosine occurs at positions 62 and 66. A Tyrosine-protein phosphatase domain is found at 247–517 (FWEEFETLQQ…EAQYRFIYMA (271 aa)). Substrate is bound by residues D425, 459–465 (CSAGIGR), and Q506. The active-site Phosphocysteine intermediate is C459. Residues Y542 and Y580 each carry the phosphotyrosine; by PDGFR modification.

The protein belongs to the protein-tyrosine phosphatase family. Non-receptor class 2 subfamily. Interacts with phosphorylated SIT1, LIME1, BCAR3 and MZPL1. Interacts with FCRL4, FCRL6, ANKHD1, SHB, INPP5D/SHIP1 and CD84. Interacts with MILR1 (tyrosine-phosphorylated). Interacts with FLT1 (tyrosine-phosphorylated), FLT3 (tyrosine-phosphorylated), FLT4 (tyrosine-phosphorylated), KIT and GRB2. Interacts with PTPNS1. Interacts with KIR2DL1; the interaction is enhanced by ARRB2. Interacts (via SH2 domain) with TEK/TIE2 (tyrosine phosphorylated). Interacts with GAB2. Interacts with TERT; the interaction retains TERT in the nucleus. Interacts with PECAM1 and FER. Interacts with EPHA2 (activated); participates in PTK2/FAK1 dephosphorylation in EPHA2 downstream signaling. Interacts with PDGFRA (tyrosine phosphorylated). Interacts with PDGFRB (tyrosine phosphorylated); this interaction increases the PTPN11 phosphatase activity. Interacts with ROS1; this mediates PTPN11 phosphorylation. Interacts with CEACAM1 (via cytoplasmic domain); this interaction depends on the monomer/dimer equilibrium and is phosphorylation-dependent. Interacts with MPIG6B (via ITIM motif). Interacts with SIGLEC10. Interacts with CLEC12B (via ITIM motif); this interaction triggers dephosphorylation and activation of PTPN11. Interacts (via SH2 domains) with NEDD9/CAS-L; the interaction is enhanced when NEDD9/CAS-L is tyrosine phosphorylated. Post-translationally, phosphorylated on Tyr-542 and Tyr-580 upon receptor protein tyrosine kinase activation; which creates a binding site for GRB2 and other SH2-containing proteins. Phosphorylated upon activation of the receptor-type kinase FLT3. Phosphorylated upon activation of the receptor-type kinase PDGFRA. Phosphorylated by activated PDGFRB. As to expression, expressed in brain, muscle and lung.

Its subcellular location is the cytoplasm. It carries out the reaction O-phospho-L-tyrosyl-[protein] + H2O = L-tyrosyl-[protein] + phosphate. Inhibited by orthovanadate, molybdate and spermidine. Functionally, acts downstream of various receptor and cytoplasmic protein tyrosine kinases to participate in the signal transduction from the cell surface to the nucleus. Positively regulates MAPK signal transduction pathway. Dephosphorylates GAB1, ARHGAP35 and EGFR. Dephosphorylates ROCK2 at 'Tyr-722' resulting in stimulation of its RhoA binding activity. Dephosphorylates CDC73. Dephosphorylates SOX9 on tyrosine residues, leading to inactivate SOX9 and promote ossification. Dephosphorylates tyrosine-phosphorylated NEDD9/CAS-L. The chain is Tyrosine-protein phosphatase non-receptor type 11 (Ptpn11) from Rattus norvegicus (Rat).